The sequence spans 627 residues: tRNA uridine 5-carboxymethylaminomethyl modification enzyme MnmG (627 aa).

Residues 16-21, valine 128, and serine 183 each bind FAD; that span reads GAGHAG. 277-291 is a binding site for NAD(+); sequence GPRYCPSIEDKIVRF. An FAD-binding site is contributed by glutamine 374.

This sequence belongs to the MnmG family. Homodimer. Heterotetramer of two MnmE and two MnmG subunits. It depends on FAD as a cofactor.

The protein localises to the cytoplasm. Its function is as follows. NAD-binding protein involved in the addition of a carboxymethylaminomethyl (cmnm) group at the wobble position (U34) of certain tRNAs, forming tRNA-cmnm(5)s(2)U34. The protein is tRNA uridine 5-carboxymethylaminomethyl modification enzyme MnmG of Finegoldia magna (strain ATCC 29328 / DSM 20472 / WAL 2508) (Peptostreptococcus magnus).